Reading from the N-terminus, the 453-residue chain is Bifunctional protein GlmU (453 aa).

The segment at 1-226 (MKFSAVILAA…PIEVEGVNDR (226 aa)) is pyrophosphorylase. Residues 8 to 11 (LAAG), K22, Q73, 78 to 79 (GT), 100 to 102 (YGD), G137, E151, N166, and N224 each bind UDP-N-acetyl-alpha-D-glucosamine. Mg(2+) is bound at residue D102. Position 224 (N224) interacts with Mg(2+). Residues 227–247 (AQLARLERAFQAAQAKKLLEQ) form a linker region. The interval 248 to 453 (GVMLRDPARF…TGWQRPVKKK (206 aa)) is N-acetyltransferase. UDP-N-acetyl-alpha-D-glucosamine-binding residues include R330 and K348. Residue H360 is the Proton acceptor of the active site. UDP-N-acetyl-alpha-D-glucosamine is bound by residues Y363 and N374. Acetyl-CoA-binding positions include A377, 383 to 384 (NY), S402, A420, and R437.

This sequence in the N-terminal section; belongs to the N-acetylglucosamine-1-phosphate uridyltransferase family. In the C-terminal section; belongs to the transferase hexapeptide repeat family. In terms of assembly, homotrimer. Mg(2+) is required as a cofactor.

It localises to the cytoplasm. It carries out the reaction alpha-D-glucosamine 1-phosphate + acetyl-CoA = N-acetyl-alpha-D-glucosamine 1-phosphate + CoA + H(+). The catalysed reaction is N-acetyl-alpha-D-glucosamine 1-phosphate + UTP + H(+) = UDP-N-acetyl-alpha-D-glucosamine + diphosphate. It functions in the pathway nucleotide-sugar biosynthesis; UDP-N-acetyl-alpha-D-glucosamine biosynthesis; N-acetyl-alpha-D-glucosamine 1-phosphate from alpha-D-glucosamine 6-phosphate (route II): step 2/2. Its pathway is nucleotide-sugar biosynthesis; UDP-N-acetyl-alpha-D-glucosamine biosynthesis; UDP-N-acetyl-alpha-D-glucosamine from N-acetyl-alpha-D-glucosamine 1-phosphate: step 1/1. It participates in bacterial outer membrane biogenesis; LPS lipid A biosynthesis. In terms of biological role, catalyzes the last two sequential reactions in the de novo biosynthetic pathway for UDP-N-acetylglucosamine (UDP-GlcNAc). The C-terminal domain catalyzes the transfer of acetyl group from acetyl coenzyme A to glucosamine-1-phosphate (GlcN-1-P) to produce N-acetylglucosamine-1-phosphate (GlcNAc-1-P), which is converted into UDP-GlcNAc by the transfer of uridine 5-monophosphate (from uridine 5-triphosphate), a reaction catalyzed by the N-terminal domain. The chain is Bifunctional protein GlmU from Vibrio vulnificus (strain YJ016).